The following is a 149-amino-acid chain: D-aminoacyl-tRNA deacylase (149 aa).

The Gly-cisPro motif, important for rejection of L-amino acids motif lies at 137–138 (GP).

The protein belongs to the DTD family. As to quaternary structure, homodimer.

Its subcellular location is the cytoplasm. The catalysed reaction is glycyl-tRNA(Ala) + H2O = tRNA(Ala) + glycine + H(+). It catalyses the reaction a D-aminoacyl-tRNA + H2O = a tRNA + a D-alpha-amino acid + H(+). An aminoacyl-tRNA editing enzyme that deacylates mischarged D-aminoacyl-tRNAs. Also deacylates mischarged glycyl-tRNA(Ala), protecting cells against glycine mischarging by AlaRS. Acts via tRNA-based rather than protein-based catalysis; rejects L-amino acids rather than detecting D-amino acids in the active site. By recycling D-aminoacyl-tRNA to D-amino acids and free tRNA molecules, this enzyme counteracts the toxicity associated with the formation of D-aminoacyl-tRNA entities in vivo and helps enforce protein L-homochirality. This Desulforamulus reducens (strain ATCC BAA-1160 / DSM 100696 / MI-1) (Desulfotomaculum reducens) protein is D-aminoacyl-tRNA deacylase.